A 410-amino-acid polypeptide reads, in one-letter code: Peptidase T-like protein YPO1009/y3403/YP_3421 (410 aa).

Residue His82 coordinates Zn(2+). Asp84 is an active-site residue. Position 144 (Asp144) interacts with Zn(2+). The active-site Proton acceptor is the Glu176. 3 residues coordinate Zn(2+): Glu177, Asp200, and His382.

Belongs to the peptidase M20B family. Zn(2+) serves as cofactor.

This chain is Peptidase T-like protein YPO1009/y3403/YP_3421, found in Yersinia pestis.